The sequence spans 308 residues: Acetaldehyde dehydrogenase 2 (308 aa).

Residue 12 to 15 participates in NAD(+) binding; sequence SGNI. Cys-127 serves as the catalytic Acyl-thioester intermediate. NAD(+)-binding positions include 162 to 170 and Asn-281; that span reads SAGPGTRAN.

Belongs to the acetaldehyde dehydrogenase family.

The catalysed reaction is acetaldehyde + NAD(+) + CoA = acetyl-CoA + NADH + H(+). In Mycobacterium marinum (strain ATCC BAA-535 / M), this protein is Acetaldehyde dehydrogenase 2.